The chain runs to 392 residues: MDLYEYQGRDLFERHGLPVLAGGVATTPEEARAIAERLGGRVVVKAQVKVGGRGKAGGVKLAEGADETVARATDILGMDIKGHTVHKVMITVTADVAEEYYFSYLLDRANRTFLCIASVAGGMDIEQVAAETPEKVVKAPIDANTGVDAAMARQIITRAGFPAEVVDQAVEVAVDLWKAFVAEDATLVEVNPLARTGQGGLLLLDAKVSLDENAAFRHPDHEALVDQAAVDPLEQAAKEKDLNYVKLDGEVGIIGNGAGLVMSTLDVVAYAGERHGGVKPANFLDIGGGASAAVMANGLEIVLSDPSVKSVFVNVFGGITACDAVANGIVQALALLEQRGEKVTRPLVVRLDGNNAEAGRAILDGANNPLIQRVDTMDGAAERAAELAAAGV.

The ATP-grasp domain maps to 9–236; sequence RDLFERHGLP…QAAVDPLEQA (228 aa). ATP contacts are provided by residues K45, 52–54, A94, and E99; that span reads GRG. N191 and D205 together coordinate Mg(2+). Substrate contacts are provided by residues N256 and 318 to 320; that span reads GIT.

It belongs to the succinate/malate CoA ligase beta subunit family. Heterotetramer of two alpha and two beta subunits. Requires Mg(2+) as cofactor.

It catalyses the reaction succinate + ATP + CoA = succinyl-CoA + ADP + phosphate. The enzyme catalyses GTP + succinate + CoA = succinyl-CoA + GDP + phosphate. The protein operates within carbohydrate metabolism; tricarboxylic acid cycle; succinate from succinyl-CoA (ligase route): step 1/1. In terms of biological role, succinyl-CoA synthetase functions in the citric acid cycle (TCA), coupling the hydrolysis of succinyl-CoA to the synthesis of either ATP or GTP and thus represents the only step of substrate-level phosphorylation in the TCA. The beta subunit provides nucleotide specificity of the enzyme and binds the substrate succinate, while the binding sites for coenzyme A and phosphate are found in the alpha subunit. The protein is Succinate--CoA ligase [ADP-forming] subunit beta of Salinispora arenicola (strain CNS-205).